The primary structure comprises 319 residues: HPr kinase/phosphorylase (319 aa).

Active-site residues include His141 and Lys162. 156–163 (GNSGVGKS) lines the ATP pocket. Residue Ser163 participates in Mg(2+) binding. The active-site Proton acceptor; for phosphorylation activity. Proton donor; for dephosphorylation activity is Asp180. An important for the catalytic mechanism of both phosphorylation and dephosphorylation region spans residues 204-213 (MEIRGIGIID). A Mg(2+)-binding site is contributed by Glu205. Arg246 is a catalytic residue. Residues 267–272 (PVKVGR) are important for the catalytic mechanism of dephosphorylation.

Belongs to the HPrK/P family. In terms of assembly, homohexamer. Mg(2+) is required as a cofactor.

The enzyme catalyses [HPr protein]-L-serine + ATP = [HPr protein]-O-phospho-L-serine + ADP + H(+). The catalysed reaction is [HPr protein]-O-phospho-L-serine + phosphate + H(+) = [HPr protein]-L-serine + diphosphate. Functionally, catalyzes the ATP- as well as the pyrophosphate-dependent phosphorylation of a specific serine residue in HPr, a phosphocarrier protein of the phosphoenolpyruvate-dependent sugar phosphotransferase system (PTS). HprK/P also catalyzes the pyrophosphate-producing, inorganic phosphate-dependent dephosphorylation (phosphorolysis) of seryl-phosphorylated HPr (P-Ser-HPr). The two antagonistic activities of HprK/P are regulated by several intracellular metabolites, which change their concentration in response to the absence or presence of rapidly metabolisable carbon sources (glucose, fructose, etc.) in the growth medium. Therefore, by controlling the phosphorylation state of HPr, HPrK/P is a sensor enzyme that plays a major role in the regulation of carbon metabolism and sugar transport: it mediates carbon catabolite repression (CCR), and regulates PTS-catalyzed carbohydrate uptake and inducer exclusion. The polypeptide is HPr kinase/phosphorylase (Lactobacillus johnsonii (strain CNCM I-12250 / La1 / NCC 533)).